Reading from the N-terminus, the 444-residue chain is Glutamate--tRNA ligase 2 (444 aa).

Residues 7 to 17 (PSPTGYLHVGN) carry the 'HIGH' region motif. The short motif at 240–244 (KLSKR) is the 'KMSKS' region element. Residue lysine 243 coordinates ATP.

It belongs to the class-I aminoacyl-tRNA synthetase family. Glutamate--tRNA ligase type 1 subfamily. As to quaternary structure, monomer.

It localises to the cytoplasm. It catalyses the reaction tRNA(Glu) + L-glutamate + ATP = L-glutamyl-tRNA(Glu) + AMP + diphosphate. Catalyzes the attachment of glutamate to tRNA(Glu) in a two-step reaction: glutamate is first activated by ATP to form Glu-AMP and then transferred to the acceptor end of tRNA(Glu). The polypeptide is Glutamate--tRNA ligase 2 (Gluconobacter oxydans (strain 621H) (Gluconobacter suboxydans)).